Reading from the N-terminus, the 616-residue chain is Electron transfer flavoprotein-ubiquinone oxidoreductase, mitochondrial (616 aa).

The N-terminal 32 residues, Met-1–Cys-32, are a transit peptide targeting the mitochondrion. Val-70–Ile-84 is a binding site for FAD. Lys-95 carries the N6-acetyllysine modification. An intramembrane segment occupies Ile-108 to Asp-129. Residues Lys-131 and Lys-222 each carry the N6-acetyllysine modification. The a ubiquinone site is built by Gly-304 and Gly-305. Residues Lys-356 and Lys-415 each carry the N6-acetyllysine modification. An intramembrane segment occupies Ala-427–Glu-446. Phosphoserine is present on Ser-550. [4Fe-4S] cluster contacts are provided by Cys-560, Cys-585, Cys-588, and Cys-591. Residues Phe-576–Pro-605 form the 4Fe-4S ferredoxin-type domain.

This sequence belongs to the ETF-QO/FixC family. In terms of assembly, monomer. [4Fe-4S] cluster is required as a cofactor. It depends on FAD as a cofactor.

It localises to the mitochondrion inner membrane. It catalyses the reaction a ubiquinone + reduced [electron-transfer flavoprotein] = a ubiquinol + oxidized [electron-transfer flavoprotein] + H(+). Functionally, accepts electrons from ETF and reduces ubiquinone. The chain is Electron transfer flavoprotein-ubiquinone oxidoreductase, mitochondrial (Etfdh) from Rattus norvegicus (Rat).